The primary structure comprises 265 residues: Urease accessory protein UreH (265 aa).

It belongs to the UreD family. UreH, UreF and UreG form a complex that acts as a GTP-hydrolysis-dependent molecular chaperone, activating the urease apoprotein by helping to assemble the nickel containing metallocenter of UreC. The UreE protein probably delivers the nickel.

Its subcellular location is the cytoplasm. In terms of biological role, required for maturation of urease via the functional incorporation of the urease nickel metallocenter. The sequence is that of Urease accessory protein UreH from Helicobacter pylori (strain P12).